Consider the following 218-residue polypeptide: Riboflavin synthase (218 aa).

2 Lumazine-binding repeats span residues 1 to 97 (MFTG…LGGH) and 98 to 194 (LVSG…EKLI). Residues 4–6 (GII), 48–50 (CLT), 62–67 (DLSLET), 101–103 (GHV), Lys136, 145–147 (SLT), and 159–164 (TIVPHT) contribute to the 2,4-dihydroxypteridine site.

As to quaternary structure, homotrimer.

The catalysed reaction is 2 6,7-dimethyl-8-(1-D-ribityl)lumazine + H(+) = 5-amino-6-(D-ribitylamino)uracil + riboflavin. Its pathway is cofactor biosynthesis; riboflavin biosynthesis; riboflavin from 2-hydroxy-3-oxobutyl phosphate and 5-amino-6-(D-ribitylamino)uracil: step 2/2. In terms of biological role, catalyzes the dismutation of two molecules of 6,7-dimethyl-8-ribityllumazine, resulting in the formation of riboflavin and 5-amino-6-(D-ribitylamino)uracil. In Photobacterium leiognathi, this protein is Riboflavin synthase (ribE).